The sequence spans 457 residues: Chromosomal replication initiator protein DnaA (457 aa).

The domain I, interacts with DnaA modulators stretch occupies residues 1-73; it reads MANNYQTLYD…SKYLSEEFKK (73 aa). Positions 73-108 are domain II; it reads KENIVNFEFIIDNEKLLINSNFLIKETNIKNRFNFS. The segment at 109–331 is domain III, AAA+ region; sequence DELLRYNFNN…GNLKQICFWA (223 aa). ATP-binding residues include Gly-156, Gly-158, Lys-159, and Thr-160. The interval 332-457 is domain IV, binds dsDNA; it reads DNDTNKDLII…LQINLIINKF (126 aa).

The protein belongs to the DnaA family. In terms of assembly, oligomerizes as a right-handed, spiral filament on DNA at oriC.

It localises to the cytoplasm. Functionally, plays an essential role in the initiation and regulation of chromosomal replication. ATP-DnaA binds to the origin of replication (oriC) to initiate formation of the DNA replication initiation complex once per cell cycle. Binds the DnaA box (a 9 base pair repeat at the origin) and separates the double-stranded (ds)DNA. Forms a right-handed helical filament on oriC DNA; dsDNA binds to the exterior of the filament while single-stranded (ss)DNA is stabiized in the filament's interior. The ATP-DnaA-oriC complex binds and stabilizes one strand of the AT-rich DNA unwinding element (DUE), permitting loading of DNA polymerase. After initiation quickly degrades to an ADP-DnaA complex that is not apt for DNA replication. Binds acidic phospholipids. The chain is Chromosomal replication initiator protein DnaA from Ureaplasma parvum serovar 3 (strain ATCC 700970).